The following is a 177-amino-acid chain: MPDSTRVATVYPPGYETWGEKFQRKFKENPWVPLGCLATCGALLMSAVKMRQGRSKEMNYWMRARVGLQGLTLVALVAGSMALKAAKEKAELEAANAPELTQEQIRQLEKEKEEFEMRLKEAEYSHAQEMALAAGANVRKAKTAEAAQKSAAVGVEVDTENRPSTPAPSGKSWWKMW.

In terms of domain architecture, HIG1 spans 3–94; the sequence is DSTRVATVYP…AAKEKAELEA (92 aa). 2 consecutive transmembrane segments (helical) span residues 31–48 and 61–83; these read WVPLGCLATCGALLMSAV and WMRARVGLQGLTLVALVAGSMAL. A coiled-coil region spans residues 83-129; it reads LKAAKEKAELEAANAPELTQEQIRQLEKEKEEFEMRLKEAEYSHAQE. The interval 150 to 177 is disordered; sequence SAAVGVEVDTENRPSTPAPSGKSWWKMW.

This sequence belongs to the RCF1 family. As to quaternary structure, associates with the respiratory chain complex III/complex IV supercomplex.

Its subcellular location is the mitochondrion membrane. Cytochrome c oxidase subunit which plays a role in assembly of respiratory supercomplexes. The chain is Respiratory supercomplex factor 1, mitochondrial (RCF1) from Coprinopsis cinerea (strain Okayama-7 / 130 / ATCC MYA-4618 / FGSC 9003) (Inky cap fungus).